A 510-amino-acid chain; its full sequence is ATP synthase subunit alpha (510 aa).

Gly169 to Thr176 serves as a coordination point for ATP.

The protein belongs to the ATPase alpha/beta chains family. In terms of assembly, F-type ATPases have 2 components, CF(1) - the catalytic core - and CF(0) - the membrane proton channel. CF(1) has five subunits: alpha(3), beta(3), gamma(1), delta(1), epsilon(1). CF(0) has three main subunits: a(1), b(2) and c(9-12). The alpha and beta chains form an alternating ring which encloses part of the gamma chain. CF(1) is attached to CF(0) by a central stalk formed by the gamma and epsilon chains, while a peripheral stalk is formed by the delta and b chains.

It is found in the cell inner membrane. It carries out the reaction ATP + H2O + 4 H(+)(in) = ADP + phosphate + 5 H(+)(out). In terms of biological role, produces ATP from ADP in the presence of a proton gradient across the membrane. The alpha chain is a regulatory subunit. This chain is ATP synthase subunit alpha, found in Methylobacterium radiotolerans (strain ATCC 27329 / DSM 1819 / JCM 2831 / NBRC 15690 / NCIMB 10815 / 0-1).